A 325-amino-acid chain; its full sequence is Ribosomal RNA small subunit methyltransferase H (325 aa).

Residues 1 to 28 (MTASQPLDQADQDSESSSAGSSAAETEH) form a disordered region. Positions 15-24 (ESSSAGSSAA) are enriched in low complexity. S-adenosyl-L-methionine-binding positions include 56-58 (GGH), Asp82, Tyr110, Asp131, and Gln138. The interval 303 to 325 (TDEEVQANPRSRSAKLRVAKRVE) is disordered. A compositionally biased stretch (basic residues) spans 314–325 (RSAKLRVAKRVE).

It belongs to the methyltransferase superfamily. RsmH family.

It localises to the cytoplasm. It carries out the reaction cytidine(1402) in 16S rRNA + S-adenosyl-L-methionine = N(4)-methylcytidine(1402) in 16S rRNA + S-adenosyl-L-homocysteine + H(+). Its function is as follows. Specifically methylates the N4 position of cytidine in position 1402 (C1402) of 16S rRNA. The sequence is that of Ribosomal RNA small subunit methyltransferase H from Rhodopirellula baltica (strain DSM 10527 / NCIMB 13988 / SH1).